Consider the following 712-residue polypeptide: MTTIILLAPLLGALIGGFGWRLITEKGALVVTTGLLFLSCILSWVVFLTLPAETQHIHLLDWIRSGALDTSWGIRLDRLTAIMLIVVTTVSALVHLYSWGYMAHDENWTHHEAYKARFFAYLSFFTFAMLMLVTSDNLVQMFFGWEGVGVASYLLIGFYYKKPSANAAAIKAFVVNRVGDFGFALGIMGLFFLTDSIDMDVIFASAPELAKTELHFLAWEFNAANLLAVLLFIGAMGKSAQLFLHTWLPDAMEGPTPVSALIHAATMVTAGVFLVCRMSPLFEYAPEAKMMVVYVGAVTAFFAATVGLVQNDIKRVIAYSTCSQLGYMFVAAGSGVYSVAMFHLLTHAFFKAMLFLGAGSVIHAMHHEQDMRNYGGLRKKIPFTFAIMMIGTLAITGVGIPFFSIGGVPVGFAGYLSKDAIIESAFASGNGFAFYVLVAAAGMTSFYSWRLIFLTFYGEARGDHHKHDHAHESPAVMLAPLALLAVGSVLAGMVWYHSFFGDKVASFFNLPAAAHGEAHGTEHATEGHVPEAAMTAEAAHEAAMAGTMAMAEPAAEHAVAKAPQGAIFMAETNHVIHDAHGVPDWVKLSPFGAMVTGFFFAWLYYIGDKPLPGRTARALPGLYRFLLNKWYFDELFDLLFVNPAKSLGRKLWKGGDGAVIDGAINGLALGWIPFFTRVAGRIQSGYLFHYAFAMVLGIVALMFWVVRTGGMN.

17 helical membrane-spanning segments follow: residues 4 to 24 (IILL…RLIT), 28 to 48 (ALVV…VVFL), 79 to 99 (LTAI…LYSW), 113 to 133 (AYKA…LMLV), 138 to 158 (LVQM…LIGF), 183 to 203 (FALG…DVIF), 216 to 236 (FLAW…IGAM), 256 to 276 (TPVS…FLVC), 290 to 310 (MMVV…GLVQ), 325 to 345 (LGYM…FHLL), 346 to 366 (THAF…HAMH), 385 to 405 (FAIM…FFSI), 421 to 441 (IIES…VAAA), 475 to 495 (AVML…GMVW), 588 to 608 (LSPF…YIGD), 655 to 675 (GDGA…IPFF), and 686 to 706 (YLFH…FWVV).

It belongs to the complex I subunit 5 family. In terms of assembly, NDH-1 is composed of 14 different subunits. Subunits NuoA, H, J, K, L, M, N constitute the membrane sector of the complex.

It localises to the cellular chromatophore membrane. The enzyme catalyses a quinone + NADH + 5 H(+)(in) = a quinol + NAD(+) + 4 H(+)(out). Its function is as follows. NDH-1 shuttles electrons from NADH, via FMN and iron-sulfur (Fe-S) centers, to quinones in the respiratory chain. The immediate electron acceptor for the enzyme in this species is believed to be ubiquinone. Couples the redox reaction to proton translocation (for every two electrons transferred, four hydrogen ions are translocated across the cytoplasmic membrane), and thus conserves the redox energy in a proton gradient. The protein is NADH-quinone oxidoreductase subunit L (nuoL) of Rhodobacter capsulatus (Rhodopseudomonas capsulata).